A 119-amino-acid polypeptide reads, in one-letter code: Large ribosomal subunit protein uL22 (119 aa).

This sequence belongs to the universal ribosomal protein uL22 family. Part of the 50S ribosomal subunit.

This protein binds specifically to 23S rRNA; its binding is stimulated by other ribosomal proteins, e.g. L4, L17, and L20. It is important during the early stages of 50S assembly. It makes multiple contacts with different domains of the 23S rRNA in the assembled 50S subunit and ribosome. Functionally, the globular domain of the protein is located near the polypeptide exit tunnel on the outside of the subunit, while an extended beta-hairpin is found that lines the wall of the exit tunnel in the center of the 70S ribosome. The chain is Large ribosomal subunit protein uL22 from Bifidobacterium animalis subsp. lactis (strain AD011).